The following is a 176-amino-acid chain: NADH-quinone oxidoreductase subunit I 2 (176 aa).

4Fe-4S ferredoxin-type domains are found at residues 45-77 and 87-116; these read IVLT…MEAA and RWFR…MTPD. Positions 57, 60, 63, 67, 96, 99, 102, and 106 each coordinate [4Fe-4S] cluster.

This sequence belongs to the complex I 23 kDa subunit family. In terms of assembly, NDH-1 is composed of 14 different subunits. Subunits NuoA, H, J, K, L, M, N constitute the membrane sector of the complex. The cofactor is [4Fe-4S] cluster.

Its subcellular location is the cell inner membrane. The catalysed reaction is a quinone + NADH + 5 H(+)(in) = a quinol + NAD(+) + 4 H(+)(out). Functionally, NDH-1 shuttles electrons from NADH, via FMN and iron-sulfur (Fe-S) centers, to quinones in the respiratory chain. The immediate electron acceptor for the enzyme in this species is believed to be ubiquinone. Couples the redox reaction to proton translocation (for every two electrons transferred, four hydrogen ions are translocated across the cytoplasmic membrane), and thus conserves the redox energy in a proton gradient. The protein is NADH-quinone oxidoreductase subunit I 2 of Geobacter sulfurreducens (strain ATCC 51573 / DSM 12127 / PCA).